The primary structure comprises 503 residues: Protein DETOXIFICATION 36 (503 aa).

12 consecutive transmembrane segments (helical) span residues 54 to 74, 87 to 107, 137 to 157, 166 to 186, 203 to 223, 225 to 245, 271 to 293, 313 to 333, 355 to 375, 399 to 419, 427 to 447, and 456 to 476; these read LFHL…MSML, LAAA…LMLG, IVLV…KPLL, VASV…AYAV, SAYI…LSVF, FGWG…IIVL, GLWD…SWYS, LAIC…FNAA, AVTT…ILSW, FLAI…VAVG, AYVN…VLGF, and IWTG…IVTF.

The protein belongs to the multi antimicrobial extrusion (MATE) (TC 2.A.66.1) family.

Its subcellular location is the membrane. This chain is Protein DETOXIFICATION 36, found in Arabidopsis thaliana (Mouse-ear cress).